The sequence spans 642 residues: Cysteine-rich receptor-like protein kinase 27 (642 aa).

A signal peptide spans 1–24; it reads MASTSIMLSSFFSFFFLTFFVTYA. Residues 25–274 are Extracellular-facing; it reads QQNVTVHTIC…QGKSKDRSKT (250 aa). 7 N-linked (GlcNAc...) asparagine glycosylation sites follow: Asn-27, Asn-40, Asn-44, Asn-70, Asn-145, Asn-173, and Asn-258. Gnk2-homologous domains follow at residues 29 to 130 and 136 to 240; these read TVHT…SRII and PVPF…VYPF. Residues 275–295 traverse the membrane as a helical segment; that stretch reads LIFAVVPIVAIILGLVFLFIY. The Cytoplasmic portion of the chain corresponds to 296 to 642; the sequence is LKRRRKKKTL…DVSLTDLSAR (347 aa). Positions 333 to 620 constitute a Protein kinase domain; it reads FSLTNKIGEG…QLPKPSQPGF (288 aa). ATP is bound by residues 339–347 and Lys-361; that span reads IGEGGFGVV. A Phosphotyrosine modification is found at Tyr-406. Asp-458 functions as the Proton acceptor in the catalytic mechanism. Ser-462 bears the Phosphoserine mark. Thr-498 carries the phosphothreonine modification. A Phosphotyrosine modification is found at Tyr-506.

Belongs to the protein kinase superfamily. Ser/Thr protein kinase family. CRK subfamily.

The protein resides in the membrane. It catalyses the reaction L-seryl-[protein] + ATP = O-phospho-L-seryl-[protein] + ADP + H(+). The catalysed reaction is L-threonyl-[protein] + ATP = O-phospho-L-threonyl-[protein] + ADP + H(+). The sequence is that of Cysteine-rich receptor-like protein kinase 27 (CRK27) from Arabidopsis thaliana (Mouse-ear cress).